Reading from the N-terminus, the 389-residue chain is Protein WALLS ARE THIN 1 (389 aa).

10 consecutive transmembrane segments (helical) span residues 18 to 38 (LQLHIAMLTLQFGYAGFHVVS), 49 to 69 (LVFPVYRNIIALLLLLPFAYF), 76 to 96 (PAITLNFLIQFFFLALIGITA), 111 to 131 (TFASSMQNSVPAITFLMAALL), 143 to 163 (GISKILGTALCVAGASVITLY), 198 to 218 (WTLGCIYLIGHCLSWSGWLVF), 230 to 250 (LSVTSYTCFFGIIQFLIIAAF), 266 to 286 (LFTILYAGIVASGIAFAVQIW), 294 to 314 (VFVAVYQPVQTLVVAIMASIA), and 319 to 339 (FYLGGIIGAVLIIAGLYFVLY). EamA domains lie at 32 to 161 (AGFH…SVIT) and 210 to 339 (LSWS…FVLY). The residue at position 372 (Ser372) is a Phosphoserine.

It belongs to the drug/metabolite transporter (DMT) superfamily. Plant drug/metabolite exporter (P-DME) (TC 2.A.7.4) family. Mostly expressed in stems and hypocotyls, also present in seedlings, root, leaves, flowers and siliques. Ubiquitous, mostly expressed in vascular tissues and secondary wall-forming cells, including developing xylem vessels and fibers.

The protein localises to the vacuole membrane. Functionally, required for secondary wall formation in fibers, especially in short days conditions. Promotes indole metabolism and transport (e.g. tryptophan, neoglucobrassicin and auxin (indole-3-acetic acid)). May prevent salicylic-acid (SA) accumulation. This chain is Protein WALLS ARE THIN 1 (WAT1), found in Arabidopsis thaliana (Mouse-ear cress).